The chain runs to 210 residues: Adenylate kinase isoenzyme 1 (210 aa).

Position 30-35 (30-35) interacts with ATP; sequence GSGKGT. The NMP stretch occupies residues 50 to 79; sequence SSGDLLRDEVKSGSPRGAQLTAIMESGALV. AMP is bound by residues S51, R56, 77–79, 107–110, and Q114; these read ALV and GYPR. The LID stretch occupies residues 144 to 154; sequence HRAQTSGRADD. An ATP-binding site is contributed by R145. The AMP site is built by R151 and R162. G190 contacts ATP.

The protein belongs to the adenylate kinase family. AK1 subfamily. In terms of assembly, monomer.

It is found in the cytoplasm. The catalysed reaction is AMP + ATP = 2 ADP. In terms of biological role, catalyzes the reversible transfer of the terminal phosphate group between ATP and AMP. Plays an important role in cellular energy homeostasis and in adenine nucleotide metabolism. The sequence is that of Adenylate kinase isoenzyme 1 from Caenorhabditis elegans.